The sequence spans 801 residues: uncharacterized protein (801 aa).

Positions 1-93 constitute a PE domain; sequence MSWVMVSPEL…GGAYAAAEAA (93 aa).

This sequence belongs to the mycobacterial PE family. PGRS subfamily.

This is an uncharacterized protein from Mycobacterium tuberculosis (strain ATCC 25618 / H37Rv).